The following is a 173-amino-acid chain: T-complex protein 1 subunit alpha (173 aa).

The protein belongs to the TCP-1 chaperonin family. In terms of assembly, component of the chaperonin-containing T-complex (TRiC), a heterooligomeric complex of about 850 to 900 kDa that forms two stacked rings, 12 to 16 nm in diameter.

Its subcellular location is the cytoplasm. It localises to the cytosol. Its function is as follows. Component of the chaperonin-containing T-complex (TRiC), a molecular chaperone complex that assists the folding of proteins upon ATP hydrolysis. This chain is T-complex protein 1 subunit alpha, found in Ambystoma mexicanum (Axolotl).